Consider the following 256-residue polypeptide: 5'-nucleotidase SurE (256 aa).

Asp-9, Asp-10, Ser-40, and Asn-94 together coordinate a divalent metal cation.

It belongs to the SurE nucleotidase family. The cofactor is a divalent metal cation.

It is found in the cytoplasm. The enzyme catalyses a ribonucleoside 5'-phosphate + H2O = a ribonucleoside + phosphate. Nucleotidase that shows phosphatase activity on nucleoside 5'-monophosphates. This chain is 5'-nucleotidase SurE, found in Campylobacter fetus subsp. fetus (strain 82-40).